Reading from the N-terminus, the 397-residue chain is Metal tolerance protein 4 (397 aa).

Over residues 1-19 (MEAKGENDARAPLLAERRR) the composition is skewed to basic and acidic residues. Residues 1–27 (MEAKGENDARAPLLAERRRNSVGSMRG) are disordered. The Cytoplasmic segment spans residues 1–104 (MEAKGENDAR…EQKQSEFAMK (104 aa)). Residues 105–122 (ISNYANMILLALKIYATI) traverse the membrane as a helical segment. Over 123–126 (KSGS) the chain is Vacuolar. Residues 127-147 (IAIAASTLDSLLDLMAGGILW) traverse the membrane as a helical segment. Residues 148–170 (FTHLSMKSINVYKYPIGKLRVQP) are Cytoplasmic-facing. Residues 171-191 (VGIIIFAAVMATLGFQVFVQA) traverse the membrane as a helical segment. Residues 192-208 (VEKLIVNETPDKLTPVQ) are Vacuolar-facing. Residues 209-229 (LTWLYSIMIFATVVKLALWLY) form a helical membrane-spanning segment. Residues 230 to 248 (CRTSGNKIVRAYAKDHYFD) are Cytoplasmic-facing. Residues 249 to 269 (VVTNVVGLAAAVLGDMFYWWI) traverse the membrane as a helical segment. Residue D270 is a topological domain, vacuolar. A helical membrane pass occupies residues 271-291 (PVGAIALAVYTITNWSGTVWE). Residues 292–397 (NAVSLVGESA…ILSKLPSSQP (106 aa)) lie on the Cytoplasmic side of the membrane.

This sequence belongs to the cation diffusion facilitator (CDF) transporter (TC 2.A.4) family. SLC30A subfamily.

Its subcellular location is the vacuole membrane. In terms of biological role, involved in sequestration of excess metal in the cytoplasm into vacuoles to maintain metal homeostasis. In Oryza sativa subsp. japonica (Rice), this protein is Metal tolerance protein 4 (MTP4).